The following is a 429-amino-acid chain: Large ribosomal subunit protein mL37 (429 aa).

The transit peptide at 1-29 directs the protein to the mitochondrion; that stretch reads MALRPVVLRRAPAHSRGILTRPGPPRPRG. The tract at residues 12–45 is disordered; that stretch reads PAHSRGILTRPGPPRPRGPLPRTPWTTRGPPPDQ. The span at 22–33 shows a compositional bias: pro residues; that stretch reads PGPPRPRGPLPR.

This sequence belongs to the mitochondrion-specific ribosomal protein mL37 family. Component of the mitochondrial ribosome large subunit (39S) which comprises a 16S rRNA and about 50 distinct proteins.

It is found in the mitochondrion. The sequence is that of Large ribosomal subunit protein mL37 (MRPL37) from Gallus gallus (Chicken).